We begin with the raw amino-acid sequence, 300 residues long: GTPase Era (300 aa).

Residues 4 to 172 (KSGFVALIGR…LEKIKKLLPE (169 aa)) form the Era-type G domain. The segment at 12-19 (GRPNVGKS) is G1. 12-19 (GRPNVGKS) contributes to the GTP binding site. The interval 38–42 (QTTRN) is G2. Residues 59–62 (DTPG) are G3. Residues 59 to 63 (DTPGV) and 122 to 125 (NKAD) contribute to the GTP site. Residues 122 to 125 (NKAD) are G4. A G5 region spans residues 151–153 (IAA). The KH type-2 domain occupies 195–281 (IREKILLNLS…NLQLWVKVKK (87 aa)).

It belongs to the TRAFAC class TrmE-Era-EngA-EngB-Septin-like GTPase superfamily. Era GTPase family. In terms of assembly, monomer.

It is found in the cytoplasm. Its subcellular location is the cell membrane. Functionally, an essential GTPase that binds both GDP and GTP, with rapid nucleotide exchange. Plays a role in 16S rRNA processing and 30S ribosomal subunit biogenesis and possibly also in cell cycle regulation and energy metabolism. The polypeptide is GTPase Era (Caldicellulosiruptor saccharolyticus (strain ATCC 43494 / DSM 8903 / Tp8T 6331)).